Consider the following 236-residue polypeptide: MGDTALHLVAAPALEATGLQVARGGRPLFRGLGFRLARGGLLCVRGANGSGKTTLLRTLAGLSRPHRGRILRAGRCIRQAANDHRGTLQYRGHRDGLRGALTVLENLQWQAALYHHRPDREAVRTALAGMGMARHLDTLASQLSQGQRRRVVLASLALFPRCRLWLLDEPQAALDVEGAERFHALLARHCQEGGAVVACSHQHLRIGGIPCDELWLSDPAPAGARSAGDRVTGTEA.

Positions 14 to 235 (LEATGLQVAR…SAGDRVTGTE (222 aa)) constitute an ABC transporter domain. Position 46–53 (46–53 (GANGSGKT)) interacts with ATP.

This sequence belongs to the ABC transporter superfamily. CcmA exporter (TC 3.A.1.107) family. In terms of assembly, the complex is composed of two ATP-binding proteins (CcmA) and two transmembrane proteins (CcmB).

It localises to the cell inner membrane. It carries out the reaction heme b(in) + ATP + H2O = heme b(out) + ADP + phosphate + H(+). Part of the ABC transporter complex CcmAB involved in the biogenesis of c-type cytochromes; once thought to export heme, this seems not to be the case, but its exact role is uncertain. Responsible for energy coupling to the transport system. This is Cytochrome c biogenesis ATP-binding export protein CcmA from Alkalilimnicola ehrlichii (strain ATCC BAA-1101 / DSM 17681 / MLHE-1).